The following is a 94-amino-acid chain: Integration host factor subunit beta (94 aa).

Belongs to the bacterial histone-like protein family. In terms of assembly, heterodimer of an alpha and a beta chain.

Its function is as follows. This protein is one of the two subunits of integration host factor, a specific DNA-binding protein that functions in genetic recombination as well as in transcriptional and translational control. The polypeptide is Integration host factor subunit beta (Brucella abortus (strain S19)).